The primary structure comprises 126 residues: Arginine decarboxylase proenzyme (126 aa).

Catalysis depends on Ser-74, which acts as the Schiff-base intermediate with substrate; via pyruvic acid. Residue Ser-74 is modified to Pyruvic acid (Ser); by autocatalysis. His-79 functions as the Proton acceptor; for processing activity in the catalytic mechanism. The Proton donor; for catalytic activity role is filled by Cys-94.

Belongs to the prokaryotic AdoMetDC family. Type 1 subfamily. In terms of assembly, heterooctamer of four alpha and four beta chains arranged as a tetramer of alpha/beta heterodimers. Pyruvate is required as a cofactor. Post-translationally, is synthesized initially as an inactive proenzyme. Formation of the active enzyme involves a self-maturation process in which the active site pyruvoyl group is generated from an internal serine residue via an autocatalytic post-translational modification. Two non-identical subunits are generated from the proenzyme in this reaction, and the pyruvate is formed at the N-terminus of the alpha chain, which is derived from the carboxyl end of the proenzyme. The post-translation cleavage follows an unusual pathway, termed non-hydrolytic serinolysis, in which the side chain hydroxyl group of the serine supplies its oxygen atom to form the C-terminus of the beta chain, while the remainder of the serine residue undergoes an oxidative deamination to produce ammonia and the pyruvoyl group blocking the N-terminus of the alpha chain.

It carries out the reaction L-arginine + H(+) = agmatine + CO2. Its pathway is amine and polyamine biosynthesis; agmatine biosynthesis; agmatine from L-arginine: step 1/1. Functionally, specifically catalyzes the decarboxylation of L-arginine to agmatine. Has no S-adenosylmethionine decarboxylase (AdoMetDC) activity. The sequence is that of Arginine decarboxylase proenzyme from Pyrobaculum aerophilum (strain ATCC 51768 / DSM 7523 / JCM 9630 / CIP 104966 / NBRC 100827 / IM2).